The following is a 93-amino-acid chain: MGRSLKKGPFVDAKLLLKVEKMNERNEKHLIKTWSRASTILPVMIGHTIAVHNGKQHVPIYITDQMVGHKLGEFVPTRTFRGHAGSDKKAARR.

It belongs to the universal ribosomal protein uS19 family.

Functionally, protein S19 forms a complex with S13 that binds strongly to the 16S ribosomal RNA. The chain is Small ribosomal subunit protein uS19 from Synechococcus sp. (strain JA-2-3B'a(2-13)) (Cyanobacteria bacterium Yellowstone B-Prime).